The chain runs to 506 residues: Bifunctional purine biosynthesis protein PurH (506 aa).

The 142-residue stretch at 1–142 (MRAIISVYRK…KNFFRVVILV (142 aa)) folds into the MGS-like domain.

Belongs to the PurH family.

The enzyme catalyses (6R)-10-formyltetrahydrofolate + 5-amino-1-(5-phospho-beta-D-ribosyl)imidazole-4-carboxamide = 5-formamido-1-(5-phospho-D-ribosyl)imidazole-4-carboxamide + (6S)-5,6,7,8-tetrahydrofolate. The catalysed reaction is IMP + H2O = 5-formamido-1-(5-phospho-D-ribosyl)imidazole-4-carboxamide. It participates in purine metabolism; IMP biosynthesis via de novo pathway; 5-formamido-1-(5-phospho-D-ribosyl)imidazole-4-carboxamide from 5-amino-1-(5-phospho-D-ribosyl)imidazole-4-carboxamide (10-formyl THF route): step 1/1. The protein operates within purine metabolism; IMP biosynthesis via de novo pathway; IMP from 5-formamido-1-(5-phospho-D-ribosyl)imidazole-4-carboxamide: step 1/1. The protein is Bifunctional purine biosynthesis protein PurH of Aquifex aeolicus (strain VF5).